The sequence spans 86 residues: Dynein light chain 1, cytoplasmic (86 aa).

Belongs to the dynein light chain family. As to quaternary structure, homodimer. Cytoplasmic dynein consists of two catalytic heavy chains (HCs) and a number of non-catalytic subunits which present intermediate chains (ICs), light intermediate chains (LICs) and light chains (LCs). Component of the nuclear pore complex (NPC). NPC constitutes the exclusive means of nucleocytoplasmic transport. NPCs allow the passive diffusion of ions and small molecules and the active, nuclear transport receptor-mediated bidirectional transport of macromolecules such as proteins, RNAs, ribonucleoparticles (RNPs), and ribosomal subunits across the nuclear envelope. Due to its 8-fold rotational symmetry, all subunits are present with 8 copies or multiples thereof.

The protein localises to the cytoplasm. The protein resides in the cytoskeleton. It is found in the nucleus. Its subcellular location is the nuclear pore complex. Functionally, acts as one of several non-catalytic accessory components of the cytoplasmic dynein complex that are thought to be involved in linking dynein to cargos and to adapter proteins that regulate dynein function. Cytoplasmic dynein 1 acts as a motor for the intracellular retrograde motility of vesicles and organelles along microtubules. May play a role in changing or maintaining the spatial distribution of cytoskeletal structures. Also a component of the nuclear pore complex. The chain is Dynein light chain 1, cytoplasmic (DYN2) from Candida glabrata (strain ATCC 2001 / BCRC 20586 / JCM 3761 / NBRC 0622 / NRRL Y-65 / CBS 138) (Yeast).